A 98-amino-acid polypeptide reads, in one-letter code: NADH-ubiquinone oxidoreductase chain 4L (98 aa).

Helical transmembrane passes span methionine 1–methionine 21, histidine 25–threonine 45, and methionine 59–valine 81.

Belongs to the complex I subunit 4L family. In terms of assembly, core subunit of respiratory chain NADH dehydrogenase (Complex I) which is composed of 45 different subunits.

The protein localises to the mitochondrion inner membrane. It catalyses the reaction a ubiquinone + NADH + 5 H(+)(in) = a ubiquinol + NAD(+) + 4 H(+)(out). Functionally, core subunit of the mitochondrial membrane respiratory chain NADH dehydrogenase (Complex I) which catalyzes electron transfer from NADH through the respiratory chain, using ubiquinone as an electron acceptor. Part of the enzyme membrane arm which is embedded in the lipid bilayer and involved in proton translocation. This is NADH-ubiquinone oxidoreductase chain 4L (MT-ND4L) from Equus asinus (Donkey).